A 162-amino-acid polypeptide reads, in one-letter code: Endoribonuclease YbeY (162 aa).

The Zn(2+) site is built by His-128, His-132, and His-138.

This sequence belongs to the endoribonuclease YbeY family. Zn(2+) serves as cofactor.

It localises to the cytoplasm. In terms of biological role, single strand-specific metallo-endoribonuclease involved in late-stage 70S ribosome quality control and in maturation of the 3' terminus of the 16S rRNA. This Lactococcus lactis subsp. cremoris (strain MG1363) protein is Endoribonuclease YbeY.